A 44-amino-acid polypeptide reads, in one-letter code: Phycoerythrin alpha-1 chain (44 aa).

A disordered region spans residues 1 to 44 (AMDKSAKAPQITIFDHRGCSRAPKSETGGTATKDDQMMVKVSQV). Position 4 is a 5-hydroxylysine (Lys-4). The 15,16-dihydrobiliverdin site is built by Cys-19 and Arg-21. Positions 24-26 (KSE) are 15,16-dihydrobiliverdin chromophore. Lys-40 serves as a coordination point for 15,16-dihydrobiliverdin.

It belongs to the phycoerythrin family. As to quaternary structure, heterotetramer of 2 different alpha chains and 2 identical beta chains. The subunit composition could comprise of any combination of 2 out of 4 different alpha units with an invariant beta unit. Contains one covalently linked 15,16-dihydrobiliverdin chromophore.

The protein localises to the plastid. It localises to the chloroplast thylakoid membrane. Light-harvesting photosynthetic tetrapyrrole chromophore-protein from the phycobiliprotein complex. This is Phycoerythrin alpha-1 chain (cpeA1) from Rhodomonas sp. (strain CS 24) (Chroomonas sp. (strain CS24)).